A 157-amino-acid chain; its full sequence is UPF0225 protein PA1039 (157 aa).

Belongs to the UPF0225 family.

This Pseudomonas aeruginosa (strain ATCC 15692 / DSM 22644 / CIP 104116 / JCM 14847 / LMG 12228 / 1C / PRS 101 / PAO1) protein is UPF0225 protein PA1039.